The chain runs to 138 residues: MAQAPEYHYVGSVDYQPTRPSAHQNLIELYGLTELAKKVGRVDEFGNKRKMRRSYKAYIQDLPGYNEILRDNTIKQWLTNPIREEVPIDIEFLHHVFSVEPGIIPGFNPKVFGLEDDVVMGNVSRDSSQPRSPSRRKK.

This sequence belongs to the Mediator complex subunit 19 family. In terms of assembly, component of the Mediator complex.

It localises to the nucleus. Component of the Mediator complex, a coactivator involved in the regulated transcription of nearly all RNA polymerase II-dependent genes. Mediator functions as a bridge to convey information from gene-specific regulatory proteins to the basal RNA polymerase II transcription machinery. Mediator is recruited to promoters by direct interactions with regulatory proteins and serves as a scaffold for the assembly of a functional preinitiation complex with RNA polymerase II and the general transcription factors. The polypeptide is Mediator of RNA polymerase II transcription subunit 19 (med19) (Schizosaccharomyces pombe (strain 972 / ATCC 24843) (Fission yeast)).